A 335-amino-acid polypeptide reads, in one-letter code: Phosphatidylglycerol--prolipoprotein diacylglyceryl transferase (335 aa).

The next 3 membrane-spanning stretches (helical) occupy residues isoleucine 31 to leucine 51, tyrosine 67 to glycine 87, and leucine 100 to isoleucine 120. Residue arginine 163 participates in a 1,2-diacyl-sn-glycero-3-phospho-(1'-sn-glycerol) binding. The next 3 helical transmembrane spans lie at proline 213–leucine 233, tyrosine 235–isoleucine 255, and serine 277–leucine 297.

This sequence belongs to the Lgt family.

The protein resides in the cell membrane. The catalysed reaction is L-cysteinyl-[prolipoprotein] + a 1,2-diacyl-sn-glycero-3-phospho-(1'-sn-glycerol) = an S-1,2-diacyl-sn-glyceryl-L-cysteinyl-[prolipoprotein] + sn-glycerol 1-phosphate + H(+). Its pathway is protein modification; lipoprotein biosynthesis (diacylglyceryl transfer). Catalyzes the transfer of the diacylglyceryl group from phosphatidylglycerol to the sulfhydryl group of the N-terminal cysteine of a prolipoprotein, the first step in the formation of mature lipoproteins. In Ureaplasma urealyticum serovar 10 (strain ATCC 33699 / Western), this protein is Phosphatidylglycerol--prolipoprotein diacylglyceryl transferase.